The primary structure comprises 275 residues: Dermonecrotic toxin SpaSicTox-betaIIA1 (275 aa).

The active site involves His-5. Glu-25 and Asp-27 together coordinate Mg(2+). His-41 (nucleophile) is an active-site residue. 2 cysteine pairs are disulfide-bonded: Cys-45-Cys-51 and Cys-47-Cys-190. Residue Asp-85 participates in Mg(2+) binding.

This sequence belongs to the arthropod phospholipase D family. Class II subfamily. Mg(2+) is required as a cofactor. As to expression, expressed by the venom gland.

Its subcellular location is the secreted. The enzyme catalyses an N-(acyl)-sphingosylphosphocholine = an N-(acyl)-sphingosyl-1,3-cyclic phosphate + choline. It catalyses the reaction an N-(acyl)-sphingosylphosphoethanolamine = an N-(acyl)-sphingosyl-1,3-cyclic phosphate + ethanolamine. It carries out the reaction a 1-acyl-sn-glycero-3-phosphocholine = a 1-acyl-sn-glycero-2,3-cyclic phosphate + choline. The catalysed reaction is a 1-acyl-sn-glycero-3-phosphoethanolamine = a 1-acyl-sn-glycero-2,3-cyclic phosphate + ethanolamine. Its function is as follows. Dermonecrotic toxins cleave the phosphodiester linkage between the phosphate and headgroup of certain phospholipids (sphingolipid and lysolipid substrates), forming an alcohol (often choline) and a cyclic phosphate. This toxin acts on sphingomyelin (SM). It may also act on ceramide phosphoethanolamine (CPE), lysophosphatidylcholine (LPC) and lysophosphatidylethanolamine (LPE), but not on lysophosphatidylserine (LPS), and lysophosphatidylglycerol (LPG). It acts by transphosphatidylation, releasing exclusively cyclic phosphate products as second products. Induces dermonecrosis, hemolysis, increased vascular permeability, edema, inflammatory response, and platelet aggregation. The sequence is that of Dermonecrotic toxin SpaSicTox-betaIIA1 from Sicarius patagonicus (Six-eyed sand spider).